Reading from the N-terminus, the 320-residue chain is MTEYFWAFTRAFIVTVIFMPAVIKFLKQSKEQAVIRKLGPDHQSKAGTPSMGGALFIAAASLSALIGSVAYSGKIGFVMVLIPILAVVAYAIIGGIDDALKMIHHADDGFRFIPKLLAQTLCAVVIMIIMWIMQIPLILNIPFIGVFNLGIFYFIFLWFWLVGWSNATNLTDGLDGLLTGTSLIVYLVYTWIALGVHNHIIVIFNASIIGALVGFLLFNKPKAKIFMGDTGSLALGAGLAIESIVLGIPFSLLWFGLIFVIETLSVVIQTIGYHFWKKRIFPMAPIHHSFEKFGWNEWQIDALFWIVTAIIGIIGILYMS.

Transmembrane regions (helical) follow at residues 5 to 25, 51 to 71, 75 to 95, 121 to 141, 143 to 163, 176 to 196, 198 to 218, 241 to 261, and 300 to 320; these read FWAFTRAFIVTVIFMPAVIKF, MGGALFIAAASLSALIGSVAY, IGFVMVLIPILAVVAYAIIGG, LCAVVIMIIMWIMQIPLILNI, FIGVFNLGIFYFIFLWFWLVG, GLLTGTSLIVYLVYTWIALGV, NHIIVIFNASIIGALVGFLLF, IESIVLGIPFSLLWFGLIFVI, and IDALFWIVTAIIGIIGILYMS.

It belongs to the glycosyltransferase 4 family. MraY subfamily. Requires Mg(2+) as cofactor.

The protein resides in the cell membrane. It carries out the reaction UDP-N-acetyl-alpha-D-muramoyl-L-alanyl-gamma-D-glutamyl-L-lysyl-D-alanyl-D-alanine + di-trans,octa-cis-undecaprenyl phosphate = Mur2Ac(oyl-L-Ala-gamma-D-Glu-L-Lys-D-Ala-D-Ala)-di-trans,octa-cis-undecaprenyl diphosphate + UMP. It participates in cell wall biogenesis; peptidoglycan biosynthesis. Catalyzes the initial step of the lipid cycle reactions in the biosynthesis of the cell wall peptidoglycan: transfers peptidoglycan precursor phospho-MurNAc-pentapeptide from UDP-MurNAc-pentapeptide onto the lipid carrier undecaprenyl phosphate, yielding undecaprenyl-pyrophosphoryl-MurNAc-pentapeptide, known as lipid I. The protein is Phospho-N-acetylmuramoyl-pentapeptide-transferase of Leuconostoc mesenteroides subsp. mesenteroides (strain ATCC 8293 / DSM 20343 / BCRC 11652 / CCM 1803 / JCM 6124 / NCDO 523 / NBRC 100496 / NCIMB 8023 / NCTC 12954 / NRRL B-1118 / 37Y).